The following is a 79-amino-acid chain: MNGFGRLEHFSGAIYEGHFKDNMFHGLGTYTFPNGAKYTGNFNENRVEGEGQYTDIQGLEWCGNFHFTAAPGLRLKLHM.

MORN repeat units follow at residues Tyr-15–Lys-37 and Tyr-38–Glu-60.

This Bos taurus (Bovine) protein is MORN repeat-containing protein 2 (MORN2).